Here is an 873-residue protein sequence, read N- to C-terminus: Zinc fingers and homeoboxes protein 1 (873 aa).

The segment at 1–63 (MASRRKSTTP…ESVDSDNQQN (63 aa)) is disordered. Positions 18 to 30 (QDPDLELISDLDE) are enriched in acidic residues. Thr36 is modified (phosphothreonine). Phosphoserine is present on residues Ser45, Ser47, and Ser48. 2 C2H2-type zinc fingers span residues 70 to 93 (YECK…DSEH) and 102 to 125 (YVCV…LKYH). Residue Lys159 forms a Glycyl lysine isopeptide (Lys-Gly) (interchain with G-Cter in SUMO2) linkage. A Phosphoserine modification is found at Ser202. The interval 202–236 (SVEDVPEEKENEIKPDREEIVENPSSSASESNTST) is disordered. Residues 212–221 (NEIKPDREEI) are compositionally biased toward basic and acidic residues. A compositionally biased stretch (low complexity) spans 223–236 (ENPSSSASESNTST). The segment at 272–432 (NSNLIPKVLI…QNNVQKSQVP (161 aa)) is required for dimerization. The tract at residues 272 to 564 (NSNLIPKVLI…AQPKQSWNPF (293 aa)) is required for interaction with NFYA. Residues 284-346 (NSIPTYNAAL…LKHGVSWTPE (63 aa)) constitute a DNA-binding region (homeobox 1). Glycyl lysine isopeptide (Lys-Gly) (interchain with G-Cter in SUMO2) cross-links involve residues Lys441, Lys454, Lys485, and Lys629. 2 consecutive DNA-binding regions (homeobox) follow at residues 464-526 (SFGI…KSNQ) and 569-630 (PQKF…EEKM). Disordered stretches follow at residues 626–667 (KEEK…ICKK) and 732–769 (SSMN…INNW). Phosphoserine is present on Ser648. A DNA-binding region (homeobox 4) is located at residues 660–722 (STGKICKKTP…YAWKNGNLKW (63 aa)). The interval 734-768 (MNGLSSLRKRGRGRPKGRGRGRPRGRPRGSKRINN) is required for nuclear localization. The span at 740-764 (LRKRGRGRPKGRGRGRPRGRPRGSK) shows a compositional bias: basic residues. Ser774 bears the Phosphoserine mark. A DNA-binding region (homeobox 5) is located at residues 777–832 (KFKTGTAILKDYYLKHKFLNEQDLDELVNKSHMGYEQVREWFAERQRRSELGIELF). The interval 829 to 873 (IELFEENEEEDEVIDDQEEDEEETDDSDTWEPPRHVKRKLSKSDD) is disordered. Acidic residues predominate over residues 831-857 (LFEENEEEDEVIDDQEEDEEETDDSDT). The interval 831–873 (LFEENEEEDEVIDDQEEDEEETDDSDTWEPPRHVKRKLSKSDD) is required for repressor activity. The segment covering 863–873 (HVKRKLSKSDD) has biased composition (basic residues).

It belongs to the ZHX family. As to quaternary structure, forms homodimers. Also forms heterodimers with ZHX3 which is a prerequisite for repressor activity and with ZHX2. Interacts with NFYA. Interacts with ATF7IP.

The protein localises to the nucleus. Acts as a transcriptional repressor. This Gorilla gorilla gorilla (Western lowland gorilla) protein is Zinc fingers and homeoboxes protein 1 (ZHX1).